The chain runs to 624 residues: Phosphatidylserine decarboxylase proenzyme 2 (624 aa).

The interval 1-30 (MGHSPSRHNACGGGGGDGESPPSPLPSRFE) is disordered. In terms of domain architecture, C2 spans 16–129 (GDGESPPSPL…KDLDEHSEVL (114 aa)). EF-hand domains follow at residues 156 to 191 (TEQS…FGNK) and 192 to 227 (LAVA…QQEK). The Ca(2+) site is built by D169, N171, D173, E175, E180, D205, N207, D209, and E216. Residues D425, H481, and S569 each act as charge relay system; for autoendoproteolytic cleavage activity in the active site. The active-site Schiff-base intermediate with substrate; via pyruvic acid; for decarboxylase activity is the S569. The residue at position 569 (S569) is a Pyruvic acid (Ser); by autocatalysis.

This sequence belongs to the phosphatidylserine decarboxylase family. PSD-B subfamily. Eukaryotic type II sub-subfamily. Heterodimer of a large membrane-associated beta subunit and a small pyruvoyl-containing alpha subunit. It depends on pyruvate as a cofactor. In terms of processing, is synthesized initially as an inactive proenzyme. Formation of the active enzyme involves a self-maturation process in which the active site pyruvoyl group is generated from an internal serine residue via an autocatalytic post-translational modification. Two non-identical subunits are generated from the proenzyme in this reaction, and the pyruvate is formed at the N-terminus of the alpha chain, which is derived from the carboxyl end of the proenzyme. The autoendoproteolytic cleavage occurs by a canonical serine protease mechanism, in which the side chain hydroxyl group of the serine supplies its oxygen atom to form the C-terminus of the beta chain, while the remainder of the serine residue undergoes an oxidative deamination to produce ammonia and the pyruvoyl prosthetic group on the alpha chain. During this reaction, the Ser that is part of the protease active site of the proenzyme becomes the pyruvoyl prosthetic group, which constitutes an essential element of the active site of the mature decarboxylase.

The protein localises to the vacuole membrane. The protein resides in the endoplasmic reticulum membrane. It carries out the reaction a 1,2-diacyl-sn-glycero-3-phospho-L-serine + H(+) = a 1,2-diacyl-sn-glycero-3-phosphoethanolamine + CO2. The protein operates within phospholipid metabolism; phosphatidylethanolamine biosynthesis; phosphatidylethanolamine from CDP-diacylglycerol: step 2/2. Catalyzes the formation of phosphatidylethanolamine (PtdEtn) from phosphatidylserine (PtdSer). Plays a central role in phospholipid metabolism and in the interorganelle trafficking of phosphatidylserine. The sequence is that of Phosphatidylserine decarboxylase proenzyme 2 from Oryza sativa subsp. japonica (Rice).